A 737-amino-acid chain; its full sequence is MAIKKPINVKQLSDKLGVPILPDDPQTIYHIQERLGKGSFGQVFKAVHFANGKVVAIKIISLDDQEAIKDVRKEISILAECNYPNIVQYFGSYFKDHQLWIVMEYCGGGSVSDLLQVIDTISEDEIALICREALKGLNYLHEFKKIHRDIKGGNILLNDRGEVKLADFGVSAQLFNTFSKRNTFVGTPYWMAPEVIQENKYDGKADVWSLGITAIEMAEGLPPNSNVHPMRVIFMIPREESPALTDKSIWSDKFQDFISKCLTKDPAERPTAKELLNHEFIQTKKPLSILSDLVENCKTLINNSSMFEDEDEEEGNYSTFVEKKTPSDDEKENNNNTVTNYSTVITKDDDDGSNNYSTVITKDEMYSTVITKDDAQTDDDNNNFSTVITKEDPPTDEESDSSCSSSSSSSRNITSPISKRKPRQPITNSPKISPISSNNINKIPADNVVSSNQATTTTTTTTTTTTTAASTTTDQDEGDVKNIVNKFQLNKPITSSNSTSVTPQKPPFPSNNTTTTSNINTPIKPSNGLKKSNSNTPVQLKTSGDKTPTTTPLKNISNNNSVIYNNSNNINNNNNNNIIAPKSPSPTTGQKIIKTNSGGVLKSSGGLSSKRSPSSKPKHSSSSKEPKESLSENLQNIYRNDCTIQLPFLTLNNISSDYLLSIDYRYNDFKSSLDDLCADPNLISSKLSFSPYIGNLIKSLSYHKDIQENELMTPKESVQNTKIVNDLSSTVKTIFRL.

One can recognise a Protein kinase domain in the interval 29 to 281 (YHIQERLGKG…AKELLNHEFI (253 aa)). ATP is bound by residues 35–43 (LGKGSFGQV) and K58. D149 acts as the Proton acceptor in catalysis. Disordered stretches follow at residues 305 to 356 (SMFE…SNNY), 372 to 475 (KDDA…TTDQ), 491 to 559 (KPIT…ISNN), and 575 to 631 (NNNI…ESLS). 4 stretches are compositionally biased toward low complexity: residues 334–345 (NNNTVTNYSTVI), 401–410 (SSCSSSSSSS), 425–444 (PITNSPKISPISSNNINKIP), and 454–473 (ATTTTTTTTTTTTTAASTTT). Residues 491-503 (KPITSSNSTSVTP) show a composition bias toward polar residues. The span at 510 to 525 (SNNTTTTSNINTPIKP) shows a compositional bias: low complexity. Polar residues-rich tracts occupy residues 529–554 (LKKSNSNTPVQLKTSGDKTPTTTPLK) and 585–596 (SPTTGQKIIKTN). The span at 597–615 (SGGVLKSSGGLSSKRSPSS) shows a compositional bias: low complexity.

The protein belongs to the protein kinase superfamily. STE Ser/Thr protein kinase family. STE20 subfamily. Requires Mg(2+) as cofactor.

It catalyses the reaction L-seryl-[protein] + ATP = O-phospho-L-seryl-[protein] + ADP + H(+). The catalysed reaction is L-threonyl-[protein] + ATP = O-phospho-L-threonyl-[protein] + ADP + H(+). This is Serine/threonine-protein kinase dst1 from Dictyostelium discoideum (Social amoeba).